The following is a 129-amino-acid chain: Protein Turandot C (129 aa).

The signal sequence occupies residues 1–21 (MNASISLLCFALLLISPFCLG).

This sequence belongs to the Turandot family.

The protein localises to the secreted. In terms of biological role, a humoral factor that may play a role in stress tolerance. The polypeptide is Protein Turandot C (Drosophila sechellia (Fruit fly)).